A 562-amino-acid chain; its full sequence is Glucocorticoid modulatory element-binding protein 1 (562 aa).

Ala2 bears the N-acetylalanine mark. Residues 72–156 (ASSIEANEDM…RKMMDSGQID (85 aa)) form the SAND domain. Residue Cys103 participates in Zn(2+) binding. DNA is bound by residues Lys129, Lys133, Lys136, and Arg147. 3 residues coordinate Zn(2+): His160, Cys164, and Cys168. Positions 311 to 357 (LDNRRKQVEHGEEQFLYTLADLERQLEEQKKQAQDPRLKSQTVQNVV) form a coiled coil. Residues 360–384 (PVSTPKPPKRPRLQRPASTTVLSPS) are disordered. A compositionally biased stretch (polar residues) spans 375 to 384 (PASTTVLSPS).

As to quaternary structure, homodimer, and heterodimer of GMEB1 and GMEB2. Interacts with the glucocorticoid receptor (NR3C1) and NCOA2/TIF2. May interact with HSP27 and CREB-binding protein (CBP). Interacts with TRIM63.

The protein resides in the nucleus. The protein localises to the cytoplasm. Functionally, trans-acting factor that binds to glucocorticoid modulatory elements (GME) present in the TAT (tyrosine aminotransferase) promoter and increases sensitivity to low concentrations of glucocorticoids. Also binds to the transferrin receptor promoter. The protein is Glucocorticoid modulatory element-binding protein 1 (Gmeb1) of Rattus norvegicus (Rat).